A 476-amino-acid chain; its full sequence is UDP-glucose 6-dehydrogenase (476 aa).

NAD(+) contacts are provided by residues 7 to 12 (GAGYVG), Asp-32, Arg-37, 85 to 89 (VNTPT), 126 to 127 (ST), and Glu-161. Substrate contacts are provided by residues 157 to 161 (EFLAE), 216 to 220 (KLAAN), Arg-256, and 263 to 269 (QASVGFG). Residue Cys-272 is the Nucleophile of the active site. Residue 272–275 (CFQK) coordinates NAD(+). 334-335 (FK) is a substrate binding site. Arg-342 lines the NAD(+) pocket. Arg-439 provides a ligand contact to substrate.

It belongs to the UDP-glucose/GDP-mannose dehydrogenase family.

It carries out the reaction UDP-alpha-D-glucose + 2 NAD(+) + H2O = UDP-alpha-D-glucuronate + 2 NADH + 3 H(+). It participates in nucleotide-sugar biosynthesis; UDP-alpha-D-glucuronate biosynthesis; UDP-alpha-D-glucuronate from UDP-alpha-D-glucose: step 1/1. Its function is as follows. Involved in the biosynthesis of glycosaminoglycans; hyaluronan, chondroitin sulfate and heparan sulfate. Required for wingless signaling in different tissues. The protein is UDP-glucose 6-dehydrogenase (sgl) of Drosophila melanogaster (Fruit fly).